The chain runs to 52 residues: uncharacterized protein (52 aa).

This is an uncharacterized protein from Bacillus subtilis (strain 168).